Consider the following 521-residue polypeptide: Aspartic proteinase yapsin-1 (521 aa).

The N-terminal stretch at 1 to 17 (MRIWILIFFSFIKLVSS) is a signal peptide. At 18-500 (LQYTGNGVLA…NAVANAGNSF (483 aa)) the chain is on the extracellular side. One can recognise a Peptidase A1 domain in the interval 67 to 409 (YTTTLSIGRP…HQSQKMIAIG (343 aa)). The active site involves Asp85. N-linked (GlcNAc...) asparagine glycosylation is found at Asn136, Asn157, Asn250, Asn289, Asn295, Asn354, Asn414, Asn418, Asn460, and Asn484. A helical membrane pass occupies residues 501–521 (SPLSAMVIMMMSAVFLGLGII).

It belongs to the peptidase A1 family.

It is found in the endoplasmic reticulum membrane. The protein resides in the secreted. Its subcellular location is the cell wall. Its function is as follows. Cleaves at paired basic residues. This is Aspartic proteinase yapsin-1 (yps1) from Schizosaccharomyces pombe (strain 972 / ATCC 24843) (Fission yeast).